The chain runs to 430 residues: Trigger factor (430 aa).

The PPIase FKBP-type domain occupies 164-249 (DDWAVIDHEG…LKALKTRQLP (86 aa)).

This sequence belongs to the FKBP-type PPIase family. Tig subfamily.

It is found in the cytoplasm. The catalysed reaction is [protein]-peptidylproline (omega=180) = [protein]-peptidylproline (omega=0). Its function is as follows. Involved in protein export. Acts as a chaperone by maintaining the newly synthesized protein in an open conformation. Functions as a peptidyl-prolyl cis-trans isomerase. The polypeptide is Trigger factor (Anaeromyxobacter sp. (strain Fw109-5)).